The sequence spans 85 residues: Beta-insect depressant toxin BmKITa (85 aa).

The signal sequence occupies residues M1–A21. Positions D22 to G82 constitute an LCN-type CS-alpha/beta domain. Disulfide bonds link C31-C81, C35-C56, C42-C63, and C46-C65. G82 is subject to Glycine amide.

Expressed by the venom gland.

The protein resides in the secreted. In terms of biological role, depressant insect beta-toxins cause a transient contraction paralysis followed by a slow flaccid paralysis. They bind voltage-independently at site-4 of sodium channels (Nav) and shift the voltage of activation toward more negative potentials thereby affecting sodium channel activation and promoting spontaneous and repetitive firing. This toxin also displays an evident analgesic effect but is devoid of any toxicity on mice. This Olivierus martensii (Manchurian scorpion) protein is Beta-insect depressant toxin BmKITa.